Consider the following 114-residue polypeptide: Ig kappa chain V region AH80-5 (114 aa).

A framework-1 region spans residues 1 to 22 (IVMTQTPSSKSVPVGDTVTINC). The complementarity-determining-1 stretch occupies residues 23-35 (QAAQSVYSNNRLS). Positions 36–50 (WFQQKPGQPPKGLIY) are framework-2. Positions 51-57 (YASTLAS) are complementarity-determining-2. Residues 58-93 (GVQQDPSRFKGSGSGTQFTLTISDVQCBBAATVYYC) form a framework-3 region. Positions 94 to 103 (QGYKSSDTRA) are complementarity-determining-3. Positions 104 to 113 (FGGGTEVVVK) are framework-4.

The sequence is that of Ig kappa chain V region AH80-5 from Oryctolagus cuniculus (Rabbit).